We begin with the raw amino-acid sequence, 504 residues long: Anthocyanidin 3-O-glucoside 5-O-glucosyltransferase (504 aa).

The Proton acceptor role is filled by histidine 23. Residue histidine 23 coordinates an anthocyanidin. The interval 107–126 (TKKGQGQGQGQGQGQGQGQG) is disordered. Residues 111-125 (QGQGQGQGQGQGQGQ) show a composition bias toward gly residues. Threonine 157, glutamine 377, histidine 392, tryptophan 395, asparagine 396, serine 397, glutamate 400, aspartate 416, and glutamine 417 together coordinate UDP-alpha-D-glucose.

Belongs to the UDP-glycosyltransferase family. Predominantly expressed in petals and weakly in filaments. Not expressed in leaves, stems and other floral organs.

The catalysed reaction is an anthocyanidin 3-O-beta-D-glucoside + UDP-alpha-D-glucose = an anthocyanidin 3,5-di-O-beta-D-glucoside + UDP + 2 H(+). Its pathway is pigment biosynthesis; anthocyanin biosynthesis. Its function is as follows. Catalyzes the glucosylation at the O-5 position of anthocyanidin 3-glucosides to form anthocyanidin 3,5-di-O-glucosides using UDP-glucose as sugar donor. Anthocyanidin 3,5-di-O-glucosides are molecules that are responsible for pigmentation. Involved in biosynsthesis of accumulate gentiodelphin, a unique polyacylated delphinidin-type anthocyanin, in the petals. Also acts on anthocyanidin 3-O-(6-O-malonylglucoside). Much less active with hydroxycinnamoylglucose derivatives. No activity in the absence of the 3-O-glucoside group. The protein is Anthocyanidin 3-O-glucoside 5-O-glucosyltransferase (5GT7) of Gentiana triflora (Clustered gentian).